We begin with the raw amino-acid sequence, 169 residues long: Large ribosomal subunit protein uL5 (169 aa).

This sequence belongs to the universal ribosomal protein uL5 family. As to quaternary structure, part of the 50S ribosomal subunit; contacts the 5S rRNA and probably tRNA. Forms a bridge to the 30S subunit in the 70S ribosome.

Functionally, this is one of the proteins that bind and probably mediate the attachment of the 5S RNA into the large ribosomal subunit, where it forms part of the central protuberance. In the 70S ribosome it contacts protein S13 of the 30S subunit (bridge B1b), connecting the 2 subunits; this bridge is implicated in subunit movement. May contact the P site tRNA; the 5S rRNA and some of its associated proteins might help stabilize positioning of ribosome-bound tRNAs. This Methanococcoides burtonii (strain DSM 6242 / NBRC 107633 / OCM 468 / ACE-M) protein is Large ribosomal subunit protein uL5.